The sequence spans 73 residues: Translation initiation factor IF-1 (73 aa).

The 72-residue stretch at 1–72 (MAKEDHIEMA…SKGRIIFRDK (72 aa)) folds into the S1-like domain.

This sequence belongs to the IF-1 family. In terms of assembly, component of the 30S ribosomal translation pre-initiation complex which assembles on the 30S ribosome in the order IF-2 and IF-3, IF-1 and N-formylmethionyl-tRNA(fMet); mRNA recruitment can occur at any time during PIC assembly.

The protein resides in the cytoplasm. One of the essential components for the initiation of protein synthesis. Stabilizes the binding of IF-2 and IF-3 on the 30S subunit to which N-formylmethionyl-tRNA(fMet) subsequently binds. Helps modulate mRNA selection, yielding the 30S pre-initiation complex (PIC). Upon addition of the 50S ribosomal subunit IF-1, IF-2 and IF-3 are released leaving the mature 70S translation initiation complex. The chain is Translation initiation factor IF-1 from Legionella pneumophila (strain Paris).